We begin with the raw amino-acid sequence, 119 residues long: Large ribosomal subunit protein bL19 (119 aa).

It belongs to the bacterial ribosomal protein bL19 family.

This protein is located at the 30S-50S ribosomal subunit interface and may play a role in the structure and function of the aminoacyl-tRNA binding site. This chain is Large ribosomal subunit protein bL19, found in Borreliella afzelii (strain PKo) (Borrelia afzelii).